The following is a 93-amino-acid chain: MLAVNEYFEGQVKSISFDGAEKPASVGVMEVGDYEFGTAAPEVMQVISGALTVMLPGQTEWQTFNAGEQFDVIGNAKFQVKVETQTAYLCIYG.

This sequence belongs to the nucleoside phosphorylase PpnP family.

The catalysed reaction is a purine D-ribonucleoside + phosphate = a purine nucleobase + alpha-D-ribose 1-phosphate. The enzyme catalyses adenosine + phosphate = alpha-D-ribose 1-phosphate + adenine. It catalyses the reaction cytidine + phosphate = cytosine + alpha-D-ribose 1-phosphate. It carries out the reaction guanosine + phosphate = alpha-D-ribose 1-phosphate + guanine. The catalysed reaction is inosine + phosphate = alpha-D-ribose 1-phosphate + hypoxanthine. The enzyme catalyses thymidine + phosphate = 2-deoxy-alpha-D-ribose 1-phosphate + thymine. It catalyses the reaction uridine + phosphate = alpha-D-ribose 1-phosphate + uracil. It carries out the reaction xanthosine + phosphate = alpha-D-ribose 1-phosphate + xanthine. In terms of biological role, catalyzes the phosphorolysis of diverse nucleosides, yielding D-ribose 1-phosphate and the respective free bases. Can use uridine, adenosine, guanosine, cytidine, thymidine, inosine and xanthosine as substrates. Also catalyzes the reverse reactions. The protein is Pyrimidine/purine nucleoside phosphorylase of Shewanella halifaxensis (strain HAW-EB4).